We begin with the raw amino-acid sequence, 184 residues long: Oligoribonuclease (184 aa).

The region spanning 8–171 (LIWIDLEMTG…DDIRESIAEL (164 aa)) is the Exonuclease domain. The active site involves tyrosine 129.

Belongs to the oligoribonuclease family.

It localises to the cytoplasm. Its function is as follows. 3'-to-5' exoribonuclease specific for small oligoribonucleotides. This Pasteurella multocida (strain Pm70) protein is Oligoribonuclease.